We begin with the raw amino-acid sequence, 420 residues long: MTKWKRANPNGTRDYLFEECTLIEEVEQKLRLTFLERGYEEIRTPTIEFYDVFAFQNRPIDEEKMYKFFDEKGRIIVLRPDMTIPLARVIGTQRWDTPLKVTYSGNVFRANESHSGKYNEIVQSGIEVIGIDNVRAEIECVISVIQALQKLNVQSFTIEIGQVQLYKCIVKKLSIHDEEERVLRTYIESKNYAALSNFIGEKKLDRCDETVRLLEKLPRLFGNLEVIEEAEKLASSNEMKMAIARVKEMYETMETLGYGSYISIDLGMIQHLDYYTGVIFKGYIYEIGEEIVSGGRYDELIGNFGETLPAVGLAVQVNQIVKALQEQQEPYERNQIDIVIHYELNRLAEAERLRNLLRKDGKNAWLSLFSNLSDTFQFARKNKIGTVVEAKNEYLVEYVWNEKWVVQKEGETSCVTFKLR.

The protein belongs to the class-II aminoacyl-tRNA synthetase family. HisZ subfamily. As to quaternary structure, heteromultimer composed of HisG and HisZ subunits.

Its subcellular location is the cytoplasm. The protein operates within amino-acid biosynthesis; L-histidine biosynthesis; L-histidine from 5-phospho-alpha-D-ribose 1-diphosphate: step 1/9. Functionally, required for the first step of histidine biosynthesis. May allow the feedback regulation of ATP phosphoribosyltransferase activity by histidine. The sequence is that of ATP phosphoribosyltransferase regulatory subunit from Bacillus cereus (strain G9842).